Here is a 307-residue protein sequence, read N- to C-terminus: Glycine--tRNA ligase alpha subunit (307 aa).

This sequence belongs to the class-II aminoacyl-tRNA synthetase family. Tetramer of two alpha and two beta subunits.

It localises to the cytoplasm. It catalyses the reaction tRNA(Gly) + glycine + ATP = glycyl-tRNA(Gly) + AMP + diphosphate. The protein is Glycine--tRNA ligase alpha subunit of Xylella fastidiosa (strain M23).